The primary structure comprises 156 residues: ATP synthase subunit b (156 aa).

A helical membrane pass occupies residues 7 to 27; sequence LIGELIAFTVFVLFCMKFVWP.

The protein belongs to the ATPase B chain family. In terms of assembly, F-type ATPases have 2 components, F(1) - the catalytic core - and F(0) - the membrane proton channel. F(1) has five subunits: alpha(3), beta(3), gamma(1), delta(1), epsilon(1). F(0) has three main subunits: a(1), b(2) and c(10-14). The alpha and beta chains form an alternating ring which encloses part of the gamma chain. F(1) is attached to F(0) by a central stalk formed by the gamma and epsilon chains, while a peripheral stalk is formed by the delta and b chains.

It localises to the cell inner membrane. Its function is as follows. F(1)F(0) ATP synthase produces ATP from ADP in the presence of a proton or sodium gradient. F-type ATPases consist of two structural domains, F(1) containing the extramembraneous catalytic core and F(0) containing the membrane proton channel, linked together by a central stalk and a peripheral stalk. During catalysis, ATP synthesis in the catalytic domain of F(1) is coupled via a rotary mechanism of the central stalk subunits to proton translocation. In terms of biological role, component of the F(0) channel, it forms part of the peripheral stalk, linking F(1) to F(0). This Pseudoalteromonas translucida (strain TAC 125) protein is ATP synthase subunit b.